Consider the following 829-residue polypeptide: MTAKFDVDYVLANITEDDKIALLSGSDFWHTHAIPKFNVPPIRTTDGPNGIRGTKFFAGVPAACLPCGTALGATWDRDLLHQAGVLLGKECLAKGAHCWLGPTINMQRSPLGGRGFESFAEDPHLSGIMAKSIILGCESTGVISTVKHYVGNDQEHERRAVDVLVTPRALREIYLRPFQIVARDAHPGALMTSYNKINGKHVVENPAMLDIVRKDWNWDPLIMSDWLGTYTTIDSMNAGLDLEMPGPTRYRGKYIESAMQARLIKQSTINKRARKVLEFVQRASRAPVSADETGRDFPEDRALNRTLCANSIVLLKNDGNLLPIPKTVKKIALIGSHVKTPAISGGGSASLEPYYAVSLYDAVVEALPDAKILYEAGAYAHKMLPVIDRMLSNAVIHFYNEPPEKERTLLATEPVVNTAFQLMDYNAPGLNRGLFWATLIGEFTPDVSGLWDFGLTVFGTATLFVDDEMVIDNTTRQTRGTAFFGKGTVQEVGQKQLTAGQTYKIRIEFGSANTSPMKAIGVVHFGGGAAHLGACLHMDPEQMVANAVKVAAEADYTIVCTGLNRDWESEGFDRPDMDLPPGIDALISSVLDLAADRTVIVNQSGTPVTLPWADRARGVVQAWYGGNETGHGIADVLFGDVNPCGKLPLSWPVDVKHNPAYLNNMSVGGRMLYGEDVYMGYRFYEKVGREVLFPFGHGLSYTTFSVSPEATVSPSVFSSDSPPTARVLVKNTGPVAGAQILQLYIAAPNSATPRPVKELHGFTKVFLQPGEERTVAIHIDKYATSFWDEIEDMWKSEEGVYQVLIGTSSQEIVSRGEFRVEQTRYWRGV.

N-linked (GlcNAc...) asparagine glycosylation occurs at Asn-13. The active site involves Asp-225. 5 N-linked (GlcNAc...) asparagine glycosylation sites follow: Asn-304, Asn-473, Asn-602, Asn-627, and Asn-664. Residues 389-548 form the PA14 domain; the sequence is RMLSNAVIHF…DPEQMVANAV (160 aa).

This sequence belongs to the glycosyl hydrolase 3 family.

The protein resides in the secreted. It carries out the reaction Hydrolysis of terminal, non-reducing beta-D-glucosyl residues with release of beta-D-glucose.. It functions in the pathway glycan metabolism; cellulose degradation. Its function is as follows. Beta-glucosidases are one of a number of cellulolytic enzymes involved in the degradation of cellulosic biomass. Catalyzes the last step releasing glucose from the inhibitory cellobiose. This chain is Probable beta-glucosidase H (bglH), found in Neosartorya fischeri (strain ATCC 1020 / DSM 3700 / CBS 544.65 / FGSC A1164 / JCM 1740 / NRRL 181 / WB 181) (Aspergillus fischerianus).